The following is a 186-amino-acid chain: Casparian strip membrane protein 1 (186 aa).

The Cytoplasmic segment spans residues 1-26 (MKSSPAELISEAKSSTQNSKMKRAVS). A helical transmembrane segment spans residues 27 to 47 (VLDFILRLIAVVATLASAIAM). The Extracellular portion of the chain corresponds to 48–74 (GTTDESLPFFTQFIRFRAEYDDLPTLR). The helical transmembrane segment at 75-95 (LFVVASAFASGYLILSLPLSI) threads the bilayer. Topologically, residues 96-107 (LHITRSSARRTR) are cytoplasmic. A helical membrane pass occupies residues 108-128 (VILIILDMVMLTSLTAASSAA). Topologically, residues 129 to 161 (AAIVYLAHKGNAKANWFAFCQQYDSFCERISGS) are extracellular. A helical membrane pass occupies residues 162–182 (LIGSFIAIPLFIMLILFSALV). Residues 183-186 (LSKR) lie on the Cytoplasmic side of the membrane.

It belongs to the Casparian strip membrane proteins (CASP) family. Homodimer and heterodimers.

It localises to the cell membrane. In terms of biological role, regulates membrane-cell wall junctions and localized cell wall deposition. Required for establishment of the Casparian strip membrane domain (CSD) and the subsequent formation of Casparian strips, a cell wall modification of the root endodermis that determines an apoplastic barrier between the intraorganismal apoplasm and the extraorganismal apoplasm and prevents lateral diffusion. The polypeptide is Casparian strip membrane protein 1 (Lotus japonicus (Lotus corniculatus var. japonicus)).